The primary structure comprises 459 residues: Interleukin-1 receptor-associated kinase 4 (459 aa).

The residue at position 1 (Met-1) is an N-acetylmethionine. The 85-residue stretch at 20 to 104 (RKLSDFIDPQ…APATLLLPDA (85 aa)) folds into the Death domain. Lys-34 carries the N6-acetyllysine modification. The segment at 115-161 (REAATVAQTHGPCQEKDRTSVMPMPKLEHSCEPPDSSSPDNRSVESS) is disordered. The Protein kinase domain maps to 186–454 (SAGGNRMGEG…PDIAKVQQLL (269 aa)). Residues 192–200 (MGEGGFGVV) and Lys-213 contribute to the ATP site. Asp-311 acts as the Proton acceptor in catalysis. Residues 313 to 316 (KSAN) and Asp-329 contribute to the ATP site. Residues Thr-342 and Thr-345 each carry the phosphothreonine modification. At Ser-346 the chain carries Phosphoserine.

It belongs to the protein kinase superfamily. TKL Ser/Thr protein kinase family. Pelle subfamily. Associates with MYD88 and IRAK2 to form a ternary complex called the Myddosome. Once phosphorylated, IRAK4 dissociates from the receptor complex and then associates with the TNF receptor-associated factor 6 (TRAF6), IRAK1, and PELI1; this intermediate complex is required for subsequent NF-kappa-B activation. Direct binding of SMAD6 to PELI1 prevents complex formation and hence negatively regulates IL1R-TLR signaling and eventually NF-kappa-B-mediated gene expression. Interacts with IL1RL1. Interacts (when phosphorylated) with IRAK1. May interact (when phosphorylated) with IRAK3. Requires Mg(2+) as cofactor. Phosphorylated.

The protein localises to the cytoplasm. It carries out the reaction L-seryl-[protein] + ATP = O-phospho-L-seryl-[protein] + ADP + H(+). The enzyme catalyses L-threonyl-[protein] + ATP = O-phospho-L-threonyl-[protein] + ADP + H(+). In terms of biological role, serine/threonine-protein kinase that plays a critical role in initiating innate immune response against foreign pathogens. Involved in Toll-like receptor (TLR) and IL-1R signaling pathways. Is rapidly recruited by MYD88 to the receptor-signaling complex upon TLR activation to form the Myddosome together with IRAK2. Phosphorylates initially IRAK1, thus stimulating the kinase activity and intensive autophosphorylation of IRAK1. Phosphorylates E3 ubiquitin ligases Pellino proteins (PELI1, PELI2 and PELI3) to promote pellino-mediated polyubiquitination of IRAK1. Then, the ubiquitin-binding domain of IKBKG/NEMO binds to polyubiquitinated IRAK1 bringing together the IRAK1-MAP3K7/TAK1-TRAF6 complex and the NEMO-IKKA-IKKB complex. In turn, MAP3K7/TAK1 activates IKKs (CHUK/IKKA and IKBKB/IKKB) leading to NF-kappa-B nuclear translocation and activation. Alternatively, phosphorylates TIRAP to promote its ubiquitination and subsequent degradation. Phosphorylates NCF1 and regulates NADPH oxidase activation after LPS stimulation suggesting a similar mechanism during microbial infections. The chain is Interleukin-1 receptor-associated kinase 4 (Irak4) from Mus musculus (Mouse).